We begin with the raw amino-acid sequence, 247 residues long: Osmotin-like protein NP24-I (247 aa).

Residues M1–A21 form the signal peptide. Disulfide bonds link C30–C225, C72–C82, C87–C93, C141–C213, C146–C196, C154–C164, C168–C177, and C178–C183.

It belongs to the thaumatin family. As to expression, highest levels of both isoforms found in the outer pericarp, with smaller amounts in the inner pericarp.

Its subcellular location is the cytoplasm. It is found in the vacuole. It catalyses the reaction Endohydrolysis of (1-&gt;3)- or (1-&gt;4)-linkages in beta-D-glucans when the glucose residue whose reducing group is involved in the linkage to be hydrolyzed is itself substituted at C-3.. Functionally, has antifungal activity against P.betae and F.dahliae. May be involved in disease resistance in tomatoes and/or have a possible role in fruit development and ripening. Binds to beta-glucans and exhibits beta-1,3-D-glucanase activity. The chain is Osmotin-like protein NP24-I from Solanum lycopersicum (Tomato).